The following is a 185-amino-acid chain: Elongation factor P (185 aa).

The protein belongs to the elongation factor P family.

The protein resides in the cytoplasm. It participates in protein biosynthesis; polypeptide chain elongation. In terms of biological role, involved in peptide bond synthesis. Stimulates efficient translation and peptide-bond synthesis on native or reconstituted 70S ribosomes in vitro. Probably functions indirectly by altering the affinity of the ribosome for aminoacyl-tRNA, thus increasing their reactivity as acceptors for peptidyl transferase. This Lachnoclostridium phytofermentans (strain ATCC 700394 / DSM 18823 / ISDg) (Clostridium phytofermentans) protein is Elongation factor P.